Consider the following 1434-residue polypeptide: DNA-directed RNA polymerase subunit beta (1434 aa).

Belongs to the RNA polymerase beta chain family. In terms of assembly, the RNAP catalytic core consists of 2 alpha, 1 beta, 1 beta' and 1 omega subunit. When a sigma factor is associated with the core the holoenzyme is formed, which can initiate transcription.

The catalysed reaction is RNA(n) + a ribonucleoside 5'-triphosphate = RNA(n+1) + diphosphate. DNA-dependent RNA polymerase catalyzes the transcription of DNA into RNA using the four ribonucleoside triphosphates as substrates. This Ureaplasma parvum serovar 3 (strain ATCC 700970) protein is DNA-directed RNA polymerase subunit beta.